A 278-amino-acid polypeptide reads, in one-letter code: Putative glycosyltransferase EpsE (278 aa).

It belongs to the glycosyltransferase 2 family.

May be involved in the production of the exopolysaccharide (EPS) component of the extracellular matrix during biofilm formation. EPS is responsible for the adhesion of chains of cells into bundles. Required for biofilm maintenance. In Bacillus subtilis (strain 168), this protein is Putative glycosyltransferase EpsE (epsE).